The sequence spans 101 residues: Helix-loop-helix protein 17 (101 aa).

Residues 14 to 27 (GVRLSINLRERCRM) are basic motif. A bHLH domain is found at 14 to 68 (GVRLSINLRERCRMHDLNEALDDLRAVIPYAHGGSVRKLSKIATLLLAKNHIIMQ). Residues 28 to 68 (HDLNEALDDLRAVIPYAHGGSVRKLSKIATLLLAKNHIIMQ) are helix-loop-helix motif.

Expressed in neuronal tissues of the head, including sheath cells of the cephalic sensilla (CEPsh) glia.

The protein resides in the nucleus. In terms of biological role, probable transcription factor that regulates the expression of dopamine receptors dop-1, dop-2 and dop-3 and thus dopamine-dependent behaviors. May act redundantly with hlh-31 and hlh-32 to regulate ventral CEPsh glia functions. May play a role in chemotactic responses in larvae. In Caenorhabditis elegans, this protein is Helix-loop-helix protein 17.